Consider the following 414-residue polypeptide: MAGMASDGTQYDPRQFDTKMNAILGEEGEETFYTNYDEVCDSFDAMELQPDLLRGIYAYGFEKPSAIQQRGIIPFCKGLDVIQQAQSGTGKTATFCSGVLQQLDISLVQCQALVLAPTRELAQQIEKVMRALGDYLGVKAQACVGGTSVREDQRVLQSGVHVVVGTPGRVFDLLRRQSLRADAIKMFVLDEADEMLSRGFKDQIYDIFQLLPSKVQVGVFSATMPPEALEITRKFMNKPVRILVKRDELTLEGIKQFYVNVDKEEWKLETLCDLYETLAITQSVIFVNTRRKVDWLTDKMRSRDHTVSATHGDMDQNTRDIIMREFRSGSSRVLITTDLLARGIDVQQVSLVINFDLPTQPENYLHRIGRSGRFGRKGVAINFMTSEDERMMADIQRFYNVVVEELPSNVADLL.

The residue at position 2 (Ala2) is an N-acetylalanine. Residues 41–69 (DSFDAMELQPDLLRGIYAYGFEKPSAIQQ) carry the Q motif motif. Residues 72 to 242 (IIPFCKGLDV…RKFMNKPVRI (171 aa)) form the Helicase ATP-binding domain. 85 to 92 (AQSGTGKT) contributes to the ATP binding site. The residue at position 106 (Ser106) is a Phosphoserine. The residue at position 147 (Thr147) is a Phosphothreonine. The DEAD box signature appears at 190–193 (DEAD). The 162-residue stretch at 253–414 (GIKQFYVNVD…ELPSNVADLL (162 aa)) folds into the Helicase C-terminal domain.

This sequence belongs to the DEAD box helicase family. eIF4A subfamily. In terms of assembly, eIF4F is a multi-subunit complex, the composition of which varies with external and internal environmental conditions. It is composed of at least EIF4A, EIF4E and EIF4G.

It localises to the cytoplasm. The enzyme catalyses ATP + H2O = ADP + phosphate + H(+). ATP-dependent RNA helicase which is a subunit of the eIF4F complex involved in cap recognition and is required for mRNA binding to ribosome. In the current model of translation initiation, eIF4A unwinds RNA secondary structures in the 5'-UTR of mRNAs which is necessary to allow efficient binding of the small ribosomal subunit, and subsequent scanning for the initiator codon. The polypeptide is Eukaryotic initiation factor 4A-3 (TIF4A-3) (Arabidopsis thaliana (Mouse-ear cress)).